The chain runs to 183 residues: Probable RNA 2'-phosphotransferase (183 aa).

The protein belongs to the KptA/TPT1 family.

Functionally, removes the 2'-phosphate from RNA via an intermediate in which the phosphate is ADP-ribosylated by NAD followed by a presumed transesterification to release the RNA and generate ADP-ribose 1''-2''-cyclic phosphate (APPR&gt;P). May function as an ADP-ribosylase. In Clostridium perfringens (strain 13 / Type A), this protein is Probable RNA 2'-phosphotransferase.